Consider the following 1318-residue polypeptide: Major tegument protein (1318 aa).

Belongs to the herpesviridae MTP family. As to quaternary structure, interacts with host DAXX; this interaction disrupts the chromatin remodeling complex ATRX:DAXX and thus allows viral transcription. Interacts with host SMC6; this interaction targets SMC5-SMC6 complex for proteasomal degradation.

It localises to the virion tegument. Its subcellular location is the host nucleus. Tegument protein that plays a role in the inhibition of host intrinsic defenses to promote viral early gene activation. Interacts with host DAXX and thereby disrupts the complex between DAXX and ATRX. Suppresses the DAXX-ATRX dependent deposition of histone H3.3 on viral chromatin allowing viral transcription. Targets also host SMC5/6 for proteasomal degradation in a CUL7 and calpain-dependent manner to support nuclear membrane-less replication compartment formation and lytic virus replication. This is Major tegument protein from Epstein-Barr virus (strain GD1) (HHV-4).